The primary structure comprises 293 residues: Phosphatidate cytidylyltransferase (293 aa).

Transmembrane regions (helical) follow at residues 6-26 (IISA…GGWY), 51-71 (IAPA…SATV), 73-93 (PHLT…YLLF), 97-117 (MATI…GYLP), 157-177 (LLVT…AYIM), 195-215 (VEGS…GAWY), 218-238 (WPYW…VSLL), and 273-293 (VFTA…LNNL).

It belongs to the CDS family.

Its subcellular location is the cell membrane. The catalysed reaction is a 1,2-diacyl-sn-glycero-3-phosphate + CTP + H(+) = a CDP-1,2-diacyl-sn-glycerol + diphosphate. The protein operates within phospholipid metabolism; CDP-diacylglycerol biosynthesis; CDP-diacylglycerol from sn-glycerol 3-phosphate: step 3/3. The chain is Phosphatidate cytidylyltransferase (cdsA) from Synechocystis sp. (strain ATCC 27184 / PCC 6803 / Kazusa).